We begin with the raw amino-acid sequence, 348 residues long: S-adenosyl-L-methionine-dependent methyl transferase PigF (348 aa).

Glutamate 199 is a binding site for S-adenosyl-L-methionine. Histidine 247 acts as the Proton acceptor in catalysis.

This sequence belongs to the class I-like SAM-binding methyltransferase superfamily. Cation-independent O-methyltransferase family.

The protein operates within antibiotic biosynthesis; prodigiosin biosynthesis. Functionally, involved in the biosynthesis of 4-methoxy-2,2'-bipyrrole-5-carbaldehyde (MBC), one of the terminal products involved in the biosynthesis of the red antibiotic prodigiosin (Pig). Catalyzes the transfer of a methyl group from S-adenosyl-L-methionine (SAM) to the hydroxyl group of 4-hydroxy-2,2'-bipyrrole-5-carbaldehyde (HBC) to yield 4-methoxy-2,2'-bipyrrole-5-carbaldehyde (MBC). The polypeptide is S-adenosyl-L-methionine-dependent methyl transferase PigF (Serratia sp. (strain ATCC 39006) (Prodigiosinella confusarubida)).